Consider the following 156-residue polypeptide: Transcription elongation factor GreA (156 aa).

Residues 1-84 (MAKYTISKHR…IEDVLRSTDE (84 aa)) adopt a coiled-coil conformation.

Belongs to the GreA/GreB family.

Necessary for efficient RNA polymerase transcription elongation past template-encoded arresting sites. The arresting sites in DNA have the property of trapping a certain fraction of elongating RNA polymerases that pass through, resulting in locked ternary complexes. Cleavage of the nascent transcript by cleavage factors such as GreA or GreB allows the resumption of elongation from the new 3'terminus. GreA releases sequences of 2 to 3 nucleotides. The protein is Transcription elongation factor GreA of Ureaplasma parvum serovar 3 (strain ATCC 27815 / 27 / NCTC 11736).